The following is a 100-amino-acid chain: MTPLLCLHHLLQQVSVTKIQTTKMQRSSPLNRLQLPMVASQSQSLSLSPMSPLPSTLQSPQIRLHNTLLSPVHLLLPLPLQVTYNGTTPLRLLIRPVGEL.

This is an uncharacterized protein from Saccharomyces cerevisiae (strain ATCC 204508 / S288c) (Baker's yeast).